A 113-amino-acid polypeptide reads, in one-letter code: Colicin-E1 immunity protein (113 aa).

This protein is able to protect a cell, which harbors the plasmid ColE1 encoding colicin E1, against colicin E1. This is Colicin-E1 immunity protein (imm) from Escherichia coli.